Consider the following 323-residue polypeptide: HPr kinase/phosphorylase (323 aa).

Catalysis depends on residues His146 and Lys167. 161–168 (GESGLGKS) lines the ATP pocket. Ser168 serves as a coordination point for Mg(2+). Asp185 serves as the catalytic Proton acceptor; for phosphorylation activity. Proton donor; for dephosphorylation activity. The segment at 209–218 (LEVRGLGLLD) is important for the catalytic mechanism of both phosphorylation and dephosphorylation. Residue Glu210 participates in Mg(2+) binding. Arg250 is a catalytic residue. Residues 271–276 (QVAAGR) form an important for the catalytic mechanism of dephosphorylation region.

It belongs to the HPrK/P family. Homohexamer. Mg(2+) is required as a cofactor.

The catalysed reaction is [HPr protein]-L-serine + ATP = [HPr protein]-O-phospho-L-serine + ADP + H(+). It catalyses the reaction [HPr protein]-O-phospho-L-serine + phosphate + H(+) = [HPr protein]-L-serine + diphosphate. Functionally, catalyzes the ATP- as well as the pyrophosphate-dependent phosphorylation of a specific serine residue in HPr, a phosphocarrier protein of the phosphoenolpyruvate-dependent sugar phosphotransferase system (PTS). HprK/P also catalyzes the pyrophosphate-producing, inorganic phosphate-dependent dephosphorylation (phosphorolysis) of seryl-phosphorylated HPr (P-Ser-HPr). In Cupriavidus necator (strain ATCC 17699 / DSM 428 / KCTC 22496 / NCIMB 10442 / H16 / Stanier 337) (Ralstonia eutropha), this protein is HPr kinase/phosphorylase.